A 360-amino-acid chain; its full sequence is Heme A synthase (360 aa).

The next 5 helical transmembrane spans lie at 13–33 (AVRWWLISVAALIALMVLVGG), 99–119 (LLGRFIGVAYLLPFLFFLWRG), 129–149 (LWLLFALGGLQGAVGWWMVAS), 160–180 (YRLATHLVLALLIFAGIVWTV), and 199–219 (SALLLVVTFVQIYLGALVAGL). Heme is bound at residue His263. Transmembrane regions (helical) follow at residues 265–282 (MTAYALFVLAALHAFDAV), 292–312 (GALWLFAAVSLQAVLGILTLL), and 315–335 (VPIGLALAHQAVAIAVLTLAV). His323 lines the heme pocket.

The protein belongs to the COX15/CtaA family. Type 2 subfamily. As to quaternary structure, interacts with CtaB. It depends on heme b as a cofactor.

It is found in the cell membrane. The enzyme catalyses Fe(II)-heme o + 2 A + H2O = Fe(II)-heme a + 2 AH2. Its pathway is porphyrin-containing compound metabolism; heme A biosynthesis; heme A from heme O: step 1/1. Functionally, catalyzes the conversion of heme O to heme A by two successive hydroxylations of the methyl group at C8. The first hydroxylation forms heme I, the second hydroxylation results in an unstable dihydroxymethyl group, which spontaneously dehydrates, resulting in the formyl group of heme A. The sequence is that of Heme A synthase from Bradyrhizobium diazoefficiens (strain JCM 10833 / BCRC 13528 / IAM 13628 / NBRC 14792 / USDA 110).